We begin with the raw amino-acid sequence, 469 residues long: L-seryl-tRNA(Sec) selenium transferase (469 aa).

The residue at position 295 (Lys-295) is an N6-(pyridoxal phosphate)lysine.

The protein belongs to the SelA family. Pyridoxal 5'-phosphate serves as cofactor.

It is found in the cytoplasm. It carries out the reaction L-seryl-tRNA(Sec) + selenophosphate + H(+) = L-selenocysteinyl-tRNA(Sec) + phosphate. It participates in aminoacyl-tRNA biosynthesis; selenocysteinyl-tRNA(Sec) biosynthesis; selenocysteinyl-tRNA(Sec) from L-seryl-tRNA(Sec) (bacterial route): step 1/1. Its function is as follows. Converts seryl-tRNA(Sec) to selenocysteinyl-tRNA(Sec) required for selenoprotein biosynthesis. In Methylocella silvestris (strain DSM 15510 / CIP 108128 / LMG 27833 / NCIMB 13906 / BL2), this protein is L-seryl-tRNA(Sec) selenium transferase.